The primary structure comprises 427 residues: Protein king tubby 1 (427 aa).

The disordered stretch occupies residues 48-174; that stretch reads SPSNPDQIIS…ASGHNDAEGD (127 aa). A compositionally biased stretch (low complexity) spans 57–86; that stretch reads SSSGSPTTVTATGTGTTTTTGSVTTTPTSP.

This sequence belongs to the TUB family.

The protein resides in the cytoplasm. The protein localises to the nucleus. The chain is Protein king tubby 1 (king-tubby1) from Culex quinquefasciatus (Southern house mosquito).